A 199-amino-acid chain; its full sequence is 7-methyl-GTP pyrophosphatase (199 aa).

Asp76 acts as the Proton acceptor in catalysis.

This sequence belongs to the Maf family. YceF subfamily. It depends on a divalent metal cation as a cofactor.

It is found in the cytoplasm. The catalysed reaction is N(7)-methyl-GTP + H2O = N(7)-methyl-GMP + diphosphate + H(+). Functionally, nucleoside triphosphate pyrophosphatase that hydrolyzes 7-methyl-GTP (m(7)GTP). May have a dual role in cell division arrest and in preventing the incorporation of modified nucleotides into cellular nucleic acids. This is 7-methyl-GTP pyrophosphatase from Nitrosococcus oceani (strain ATCC 19707 / BCRC 17464 / JCM 30415 / NCIMB 11848 / C-107).